A 135-amino-acid chain; its full sequence is Germinal center-associated signaling and motility-like protein (135 aa).

Residues 1–68 form a disordered region; the sequence is MGNYLLRKLS…ENGSGSEEVC (68 aa). Basic and acidic residues predominate over residues 22–48; that stretch reads GNPDEERKRQEMTTFERKLQDQDKKSQ. Residues 26–50 are a coiled coil; that stretch reads EERKRQEMTTFERKLQDQDKKSQEV. Over residues 51–66 the composition is skewed to low complexity; the sequence is SSTSNQENENGSGSEE.

The polypeptide is Germinal center-associated signaling and motility-like protein (GCSAML) (Homo sapiens (Human)).